A 463-amino-acid chain; its full sequence is Casein kinase 1 (463 aa).

The Protein kinase domain maps to 9 to 278 (FKLGRKIGSG…LKRLFRDLFI (270 aa)). Residues 15–23 (IGSGSFGEL) and K38 each bind ATP. The Proton acceptor role is filled by D128. The span at 296–306 (ESNRLRSSGRT) shows a compositional bias: polar residues. The disordered stretch occupies residues 296–448 (ESNRLRSSGR…TARNVHDDPT (153 aa)). Residues 315-328 (ERTERAAARQDVPD) are compositionally biased toward basic and acidic residues. 2 stretches are compositionally biased toward polar residues: residues 376-396 (TSSS…SRPS) and 404-440 (NRSN…TKTA).

Belongs to the protein kinase superfamily. CK1 Ser/Thr protein kinase family. Casein kinase I subfamily. In terms of assembly, monomer. In terms of processing, autophosphorylated. As to expression, expressed in leaves, stems, panicles and seeds. Expressed in root tissues and lamina joints.

It localises to the cytoplasm. It is found in the nucleus. It carries out the reaction L-seryl-[protein] + ATP = O-phospho-L-seryl-[protein] + ADP + H(+). It catalyses the reaction L-threonyl-[protein] + ATP = O-phospho-L-threonyl-[protein] + ADP + H(+). Its activity is regulated as follows. Inhibited by N-(2-aminoethyl)-5-chloroisoquinoline-8-sulfonamide (CKI-7). In terms of biological role, casein kinases are operationally defined by their preferential utilization of acidic proteins such as caseins as substrates. Can phosphorylate casein in vitro. Required for normal root development through modulation of cell elongation. Plants silencing CKI1 show abnormal root development, with reduced number of lateral and adventitious roots, and shortened primary roots as a result of reduced cell elongation. May be involved in abscisic acid (ABA) and brassinosteroid (BR) signaling pathways. Plays an important role in the adaptive growth and fitness under low temperature (LT) conditions. May confer tolerance to LT through an auxin-dependent process. The protein is Casein kinase 1 (CKI1) of Oryza sativa subsp. japonica (Rice).